The primary structure comprises 492 residues: Glutamyl-tRNA(Gln) amidotransferase subunit A (492 aa).

Catalysis depends on charge relay system residues Lys-80 and Ser-155. The active-site Acyl-ester intermediate is the Ser-179.

It belongs to the amidase family. GatA subfamily. In terms of assembly, heterotrimer of A, B and C subunits.

It catalyses the reaction L-glutamyl-tRNA(Gln) + L-glutamine + ATP + H2O = L-glutaminyl-tRNA(Gln) + L-glutamate + ADP + phosphate + H(+). Functionally, allows the formation of correctly charged Gln-tRNA(Gln) through the transamidation of misacylated Glu-tRNA(Gln) in organisms which lack glutaminyl-tRNA synthetase. The reaction takes place in the presence of glutamine and ATP through an activated gamma-phospho-Glu-tRNA(Gln). In Mycobacteroides abscessus (strain ATCC 19977 / DSM 44196 / CCUG 20993 / CIP 104536 / JCM 13569 / NCTC 13031 / TMC 1543 / L948) (Mycobacterium abscessus), this protein is Glutamyl-tRNA(Gln) amidotransferase subunit A.